Consider the following 259-residue polypeptide: Type III pantothenate kinase (259 aa).

6–13 provides a ligand contact to ATP; that stretch reads DCGNTNTV. 107–110 provides a ligand contact to substrate; the sequence is GPDR. D109 acts as the Proton acceptor in catalysis. D129 lines the K(+) pocket. Position 132 (T132) interacts with ATP. T184 is a binding site for substrate.

This sequence belongs to the type III pantothenate kinase family. Homodimer. It depends on NH4(+) as a cofactor. The cofactor is K(+).

It localises to the cytoplasm. The catalysed reaction is (R)-pantothenate + ATP = (R)-4'-phosphopantothenate + ADP + H(+). Its pathway is cofactor biosynthesis; coenzyme A biosynthesis; CoA from (R)-pantothenate: step 1/5. Catalyzes the phosphorylation of pantothenate (Pan), the first step in CoA biosynthesis. The polypeptide is Type III pantothenate kinase (Ruegeria pomeroyi (strain ATCC 700808 / DSM 15171 / DSS-3) (Silicibacter pomeroyi)).